Here is a 188-residue protein sequence, read N- to C-terminus: Inosine triphosphate pyrophosphatase (188 aa).

Residue 9 to 14 (TGNAKK) coordinates ITP. Mg(2+) is bound at residue Glu39. Residues Lys51, 67-68 (DT), Lys84, 143-146 (FGWD), Lys166, and 171-172 (HR) each bind ITP.

The protein belongs to the HAM1 NTPase family. Homodimer. Requires Mg(2+) as cofactor. The cofactor is Mn(2+).

It localises to the cytoplasm. The catalysed reaction is ITP + H2O = IMP + diphosphate + H(+). It carries out the reaction dITP + H2O = dIMP + diphosphate + H(+). It catalyses the reaction XTP + H2O = XMP + diphosphate + H(+). Its function is as follows. Pyrophosphatase that hydrolyzes non-canonical purine nucleotides such as inosine triphosphate (ITP), deoxyinosine triphosphate (dITP) or xanthosine 5'-triphosphate (XTP) to their respective monophosphate derivatives. The enzyme does not distinguish between the deoxy- and ribose forms. Probably excludes non-canonical purines from RNA and DNA precursor pools, thus preventing their incorporation into RNA and DNA and avoiding chromosomal lesions. In Anopheles gambiae (African malaria mosquito), this protein is Inosine triphosphate pyrophosphatase.